The following is a 213-amino-acid chain: Riboflavin/roseoflavin transporter RibM (213 aa).

The next 5 helical transmembrane spans lie at His-15–Phe-35, Ser-38–Gly-58, Ile-107–Trp-129, Tyr-136–Ala-158, and Phe-171–Met-193.

This sequence belongs to the nicotinamide ribonucleoside (NR) uptake permease (TC 4.B.1) family.

The protein resides in the cell membrane. Transports riboflavin and roseoflavin. Can also transport FMN and FAD. May confer roseoflavin resistance to S.davawensis, which naturally produces this antibiotic during stationary growth phase. The polypeptide is Riboflavin/roseoflavin transporter RibM (Streptomyces davaonensis (strain DSM 101723 / JCM 4913 / KCC S-0913 / 768)).